Reading from the N-terminus, the 318-residue chain is Ribosomal RNA small subunit methyltransferase H (318 aa).

Residues 33–35 (GGH), Asp-53, Phe-80, Asp-101, and Gln-108 each bind S-adenosyl-L-methionine.

This sequence belongs to the methyltransferase superfamily. RsmH family.

It is found in the cytoplasm. The catalysed reaction is cytidine(1402) in 16S rRNA + S-adenosyl-L-methionine = N(4)-methylcytidine(1402) in 16S rRNA + S-adenosyl-L-homocysteine + H(+). Functionally, specifically methylates the N4 position of cytidine in position 1402 (C1402) of 16S rRNA. The chain is Ribosomal RNA small subunit methyltransferase H from Symbiobacterium thermophilum (strain DSM 24528 / JCM 14929 / IAM 14863 / T).